Consider the following 180-residue polypeptide: Large ribosomal subunit protein uL6 (180 aa).

It belongs to the universal ribosomal protein uL6 family. In terms of assembly, part of the 50S ribosomal subunit.

This protein binds to the 23S rRNA, and is important in its secondary structure. It is located near the subunit interface in the base of the L7/L12 stalk, and near the tRNA binding site of the peptidyltransferase center. This chain is Large ribosomal subunit protein uL6, found in Clostridium botulinum (strain Alaska E43 / Type E3).